Here is a 169-residue protein sequence, read N- to C-terminus: SsrA-binding protein (169 aa).

It belongs to the SmpB family.

It localises to the cytoplasm. In terms of biological role, required for rescue of stalled ribosomes mediated by trans-translation. Binds to transfer-messenger RNA (tmRNA), required for stable association of tmRNA with ribosomes. tmRNA and SmpB together mimic tRNA shape, replacing the anticodon stem-loop with SmpB. tmRNA is encoded by the ssrA gene; the 2 termini fold to resemble tRNA(Ala) and it encodes a 'tag peptide', a short internal open reading frame. During trans-translation Ala-aminoacylated tmRNA acts like a tRNA, entering the A-site of stalled ribosomes, displacing the stalled mRNA. The ribosome then switches to translate the ORF on the tmRNA; the nascent peptide is terminated with the 'tag peptide' encoded by the tmRNA and targeted for degradation. The ribosome is freed to recommence translation, which seems to be the essential function of trans-translation. The chain is SsrA-binding protein from Mycolicibacterium paratuberculosis (strain ATCC BAA-968 / K-10) (Mycobacterium paratuberculosis).